A 141-amino-acid chain; its full sequence is Nucleoside diphosphate kinase (141 aa).

The ATP site is built by Lys11, Tyr59, Arg87, Thr93, Arg104, and Asn114. Catalysis depends on His117, which acts as the Pros-phosphohistidine intermediate.

It belongs to the NDK family. In terms of assembly, homotetramer. Mg(2+) is required as a cofactor.

The protein localises to the cytoplasm. The enzyme catalyses a 2'-deoxyribonucleoside 5'-diphosphate + ATP = a 2'-deoxyribonucleoside 5'-triphosphate + ADP. It carries out the reaction a ribonucleoside 5'-diphosphate + ATP = a ribonucleoside 5'-triphosphate + ADP. Major role in the synthesis of nucleoside triphosphates other than ATP. The ATP gamma phosphate is transferred to the NDP beta phosphate via a ping-pong mechanism, using a phosphorylated active-site intermediate. The sequence is that of Nucleoside diphosphate kinase from Orientia tsutsugamushi (strain Boryong) (Rickettsia tsutsugamushi).